The following is a 603-amino-acid chain: uncharacterized protein (603 aa).

Positions 4-79 (YRIRVTTVDQ…VTFHLVIAVF (76 aa)) constitute a Ubiquitin-like domain. 3 disordered regions span residues 85-121 (TLPS…PEEL), 159-178 (SLPT…NSVS), and 206-348 (AQES…NQPF). Polar residues-rich tracts occupy residues 94-117 (VPQS…TSLN) and 162-178 (THEQ…NSVS). Positions 219 to 231 (SSSSAPLASDQSP) are enriched in low complexity. Over residues 246-264 (LGSNSGLNPRSPNSFSSPL) the composition is skewed to polar residues. The segment covering 280–289 (SLSPLSNSSS) has biased composition (low complexity). Positions 290 to 314 (INQVHQNETHGSTISVPNPNLSQMG) are enriched in polar residues. A compositionally biased stretch (low complexity) spans 315–329 (PSHSSSVPSNLSPNP). A compositionally biased stretch (polar residues) spans 330-348 (AQNENPSTTSIPSINNQPF). A helical membrane pass occupies residues 496–516 (ILLTSIMSVVFLLQTGALAPF). Residues 544–578 (TAQRVVEIPNETQTEDEQDGTNTPDNRADAEEREL) are disordered. Position 566 is a phosphothreonine (T566). A compositionally biased stretch (basic and acidic residues) spans 569–578 (NRADAEEREL).

It localises to the endoplasmic reticulum membrane. This is an uncharacterized protein from Schizosaccharomyces pombe (strain 972 / ATCC 24843) (Fission yeast).